The chain runs to 60 residues: Mastoparan-VT1 (60 aa).

An N-terminal signal peptide occupies residues 1–25 (MKNTILILFTAFIALLGFFGMSAEA). A propeptide spanning residues 26 to 45 (LADLKADPLAGPNPDADPEA) is cleaved from the precursor. AXPX repeat units follow at residues 31 to 34 (ADPL), 35 to 38 (AGPN), and 41 to 44 (ADPE). Leu59 carries the leucine amide modification.

This sequence belongs to the MCD family. Mastoparan subfamily. As to expression, expressed by the venom gland.

The protein resides in the secreted. Antimicrobial peptide with activities against Gram-negative and Gram-positive bacteria and the fungi C.albicans and C.parapsilosis. Exhibits little hemolytic activity against washed human erythrocytes. Also acts as a mast cell degranulating peptide. Its mast cell degranulation activity may be related to the activation of G-protein coupled receptors in mast cells as well as interaction with other proteins located in cell endosomal membranes in the mast cells. Functionally, antimicrobial peptide with activities against Gram-negative and Gram-positive bacteria and the fungi C.albicans and C.parapsilosis. Exhibits little hemolytic activity against washed human erythrocytes. Also acts as a mast cell degranulating peptide. This Vespa tropica (Greater banded hornet) protein is Mastoparan-VT1.